A 171-amino-acid polypeptide reads, in one-letter code: Terminase, small subunit (171 aa).

The protein belongs to the P23virus small terminase family. Homononamer; forms a ring-like structure through which genomic DNA is translocated into the capsid. Heterodimer with the terminase large subunit; the active complex is probably heterooligomeric.

Functionally, the terminase small subunit binds to the packaging initiation site and regulates the ATPase activity of the terminase large subunit. The terminase lies at a unique vertex of the procapsid and is composed of two subunits, a small terminase subunit involved in viral DNA recognition (packaging sequence), and a large terminase subunit. Both terminase subunits heterooligomerize and are docked on the portal protein to form the packaging machine. This Thermus virus P23-45 (Thermus thermophilus phage P23-45) protein is Terminase, small subunit.